The following is a 555-amino-acid chain: MTHLSDLDIANQSTLQPIKDIAASVGISEDALEPYGHYKAKIDINKITPRENKGKVVLVTAMSPTPAGEGKSTVTVGLADAFHELNKNVMVALREPALGPTFGIKGGATGGGYAQVLPMEDINLHFNGDFHAITTANNALSAFIDNHIHQGNELGIDQRRIEWKRVLDMNDRALRHVNVGLGGPTNGVPREDGFNITVASEIMAILCLSRSIKDLKDKISRITIGYTRDRKPVTVADLKVEGALAMILKDAIKPNLVQSIEGTPALVHGGPFANIAHGCNSILATETARDLADIVVTEAGFGSDLGAEKFMDIKAREAGFDPAAVVVVATIRALKMHGGVAKDNLKEENVEAVKAGIVNLERHVNNIKKFGVEPVVAINAFIHDTDAEVEYVKSWAKENNVRIALTEVWEKGGKGGVDLANEVLEVIDQPNSFKPLYELELPLEQKIEKIVTEIYGGSKVTFSSKAQKQLKQFKENGWDNYPVCMAKTQYSFSDDQTLLGAPSGFEITIRELEAKTGAGFIVALTGAIMTMPGLPKKPAALNMDVTDDGHAIGLF.

ATP is bound at residue 65–72 (TPAGEGKS).

Belongs to the formate--tetrahydrofolate ligase family.

The enzyme catalyses (6S)-5,6,7,8-tetrahydrofolate + formate + ATP = (6R)-10-formyltetrahydrofolate + ADP + phosphate. The protein operates within one-carbon metabolism; tetrahydrofolate interconversion. This Staphylococcus aureus (strain NCTC 8325 / PS 47) protein is Formate--tetrahydrofolate ligase.